The following is a 715-amino-acid chain: Solute carrier organic anion transporter family member 1C1 (715 aa).

Topologically, residues M1 to K43 are cytoplasmic. The helical transmembrane segment at V44–L63 threads the bilayer. Over K64 to G82 the chain is Extracellular. Residues I83–G103 form a helical membrane-spanning segment. Residues A104–P109 lie on the Cytoplasmic side of the membrane. The helical transmembrane segment at K110–E134 threads the bilayer. Residues K135–S187 lie on the Extracellular side of the membrane. A helical transmembrane segment spans residues S188–D216. The Cytoplasmic portion of the chain corresponds to D217–A235. Residues I236–I256 traverse the membrane as a helical segment. At G257–V274 the chain is on the extracellular side. The helical transmembrane segment at G275–P299 threads the bilayer. Residues K300–T351 lie on the Cytoplasmic side of the membrane. The helical transmembrane segment at L352 to F373 threads the bilayer. The Extracellular segment spans residues G374 to K393. The chain crosses the membrane as a helical span at residues A394 to M417. The Cytoplasmic portion of the chain corresponds to K418–R421. Residues L422–L445 form a helical membrane-spanning segment. Over F446–F557 the chain is Extracellular. The N-linked (GlcNAc...) asparagine glycan is linked to N452. The 56-residue stretch at R473–G528 folds into the Kazal-like domain. Intrachain disulfides connect C479/C509, C485/C505, and C494/C526. N-linked (GlcNAc...) asparagine glycosylation is found at N523 and N536. Residues L558–L580 traverse the membrane as a helical segment. Over R581–S589 the chain is Cytoplasmic. A helical membrane pass occupies residues F590–I615. Over D616–T649 the chain is Extracellular. A helical membrane pass occupies residues T650–L667. Topologically, residues K668–L715 are cytoplasmic.

This sequence belongs to the organo anion transporter (TC 2.A.60) family. In terms of tissue distribution, widely expressed throughout the brain except in the cerebellum. Not detected in kidney, heart, lung, skeletal muscle, spleen, liver, nor testis. Highly expressed in cerebral microvessels throughout the brain and in the choroid plexus (at mRNA and protein level).

It is found in the cell membrane. It carries out the reaction 3,3',5'-triiodo-L-thyronine(out) = 3,3',5'-triiodo-L-thyronine(in). The catalysed reaction is L-thyroxine(out) = L-thyroxine(in). It catalyses the reaction L-thyroxine sulfate(out) = L-thyroxine sulfate(in). The enzyme catalyses 17beta-estradiol 17-O-(beta-D-glucuronate)(out) = 17beta-estradiol 17-O-(beta-D-glucuronate)(in). It carries out the reaction 3,3',5-triiodo-L-thyronine(out) = 3,3',5-triiodo-L-thyronine(in). Functionally, mediates the Na(+)-independent high affinity transport of thyroid hormones at the plasma membrane of brain capillary endothelial cells. The transport activity of substrates L-thyroxine (T4) and 3,3',5'-triiodo-L-thyronine (reverse T3, rT3) is much greater than that of 3,3',5-triiodo-L-thyronine (T3). The prehormone, T4, is the major form in the circulating blood and is converted to the active form, T3, by the iodothyronine-deiodinase in peripheral organs. T3 plays an essential role in brain development via binding to specific nuclear receptors (thyroid hormone receptor). Also transports organic anions such as the conjugated steroid 17-beta-glucuronosyl estradiol (17beta-estradiol 17-O-(beta-D-glucuronate)). Transports T4 and estrone-3-sulfate in a pH-insensitive manner. May serve as a drug efflux system at the blood brain barrier. In Mus musculus (Mouse), this protein is Solute carrier organic anion transporter family member 1C1 (Slco1c1).